The chain runs to 151 residues: Superoxide dismutase [Cu-Zn] 4 (151 aa).

Cu cation contacts are provided by H45, H47, and H62. A disulfide bond links C56 and C145. Positions 62, 70, 79, and 82 each coordinate Zn(2+). Cu cation is bound at residue H120.

The protein belongs to the Cu-Zn superoxide dismutase family. In terms of assembly, homodimer. Cu cation serves as cofactor. The cofactor is Zn(2+).

The protein localises to the cytoplasm. It carries out the reaction 2 superoxide + 2 H(+) = H2O2 + O2. In terms of biological role, destroys radicals which are normally produced within the cells and which are toxic to biological systems. Protects spores from cellular damage caused by UV LIGHT. The chain is Superoxide dismutase [Cu-Zn] 4 (sodD) from Dictyostelium discoideum (Social amoeba).